We begin with the raw amino-acid sequence, 352 residues long: Phospho-N-acetylmuramoyl-pentapeptide-transferase (352 aa).

Transmembrane regions (helical) follow at residues 10–30, 67–87, 88–108, 129–149, 159–179, 191–211, 227–247, 255–275, 280–300, and 329–349; these read YMFF…ALFL, TMGG…CADL, NNFY…IGLV, LLSQ…MGIN, YALF…IISS, GLAT…LYLS, GLGE…GFLW, VFMG…LGIV, ILLL…ILQV, and KIIV…LISI.

Belongs to the glycosyltransferase 4 family. MraY subfamily. Mg(2+) serves as cofactor.

The protein resides in the cell inner membrane. It carries out the reaction UDP-N-acetyl-alpha-D-muramoyl-L-alanyl-gamma-D-glutamyl-meso-2,6-diaminopimeloyl-D-alanyl-D-alanine + di-trans,octa-cis-undecaprenyl phosphate = di-trans,octa-cis-undecaprenyl diphospho-N-acetyl-alpha-D-muramoyl-L-alanyl-D-glutamyl-meso-2,6-diaminopimeloyl-D-alanyl-D-alanine + UMP. It functions in the pathway cell wall biogenesis; peptidoglycan biosynthesis. Its function is as follows. Catalyzes the initial step of the lipid cycle reactions in the biosynthesis of the cell wall peptidoglycan: transfers peptidoglycan precursor phospho-MurNAc-pentapeptide from UDP-MurNAc-pentapeptide onto the lipid carrier undecaprenyl phosphate, yielding undecaprenyl-pyrophosphoryl-MurNAc-pentapeptide, known as lipid I. This is Phospho-N-acetylmuramoyl-pentapeptide-transferase from Campylobacter lari (strain RM2100 / D67 / ATCC BAA-1060).